Here is a 244-residue protein sequence, read N- to C-terminus: MVRILAVIPARYASERLPGKVLLPIAGRPMLQWVYEATIASNVFDQVAIATEDPRVVEAAAAFGAEAILTSADLASGTDRVAEASLHFPDCKVIANVQGDQPFVTPGLLQALVSPYRAGELPEMTTVGGPYDPAQDADDPNTVKVVCDQRGNALYFSRSAIPYPRTVVHDLPVYHHFGLYAFRRDFLAQYRQLPPTPLERCESLEQLRVLEQGYRIRVVPCADKVIEVNTADDLERANAWASQR.

The protein belongs to the KdsB family.

The protein localises to the cytoplasm. The catalysed reaction is 3-deoxy-alpha-D-manno-oct-2-ulosonate + CTP = CMP-3-deoxy-beta-D-manno-octulosonate + diphosphate. It participates in nucleotide-sugar biosynthesis; CMP-3-deoxy-D-manno-octulosonate biosynthesis; CMP-3-deoxy-D-manno-octulosonate from 3-deoxy-D-manno-octulosonate and CTP: step 1/1. It functions in the pathway bacterial outer membrane biogenesis; lipopolysaccharide biosynthesis. Functionally, activates KDO (a required 8-carbon sugar) for incorporation into bacterial lipopolysaccharide in Gram-negative bacteria. The sequence is that of 3-deoxy-manno-octulosonate cytidylyltransferase from Synechococcus elongatus (strain ATCC 33912 / PCC 7942 / FACHB-805) (Anacystis nidulans R2).